A 396-amino-acid chain; its full sequence is 1-deoxy-D-xylulose 5-phosphate reductoisomerase (396 aa).

Positions 15, 16, 17, 18, 41, and 129 each coordinate NADPH. 1-deoxy-D-xylulose 5-phosphate is bound at residue Lys-130. Glu-131 provides a ligand contact to NADPH. Asp-155 serves as a coordination point for Mn(2+). Ser-156, Glu-157, Ser-182, and His-205 together coordinate 1-deoxy-D-xylulose 5-phosphate. Glu-157 lines the Mn(2+) pocket. Position 211 (Gly-211) interacts with NADPH. Residues Ser-218, Asn-223, Lys-224, and Glu-227 each coordinate 1-deoxy-D-xylulose 5-phosphate. Mn(2+) is bound at residue Glu-227.

Belongs to the DXR family. Mg(2+) is required as a cofactor. Requires Mn(2+) as cofactor.

The catalysed reaction is 2-C-methyl-D-erythritol 4-phosphate + NADP(+) = 1-deoxy-D-xylulose 5-phosphate + NADPH + H(+). It participates in isoprenoid biosynthesis; isopentenyl diphosphate biosynthesis via DXP pathway; isopentenyl diphosphate from 1-deoxy-D-xylulose 5-phosphate: step 1/6. In terms of biological role, catalyzes the NADPH-dependent rearrangement and reduction of 1-deoxy-D-xylulose-5-phosphate (DXP) to 2-C-methyl-D-erythritol 4-phosphate (MEP). The protein is 1-deoxy-D-xylulose 5-phosphate reductoisomerase of Xanthomonas oryzae pv. oryzae (strain PXO99A).